A 77-amino-acid chain; its full sequence is U8-lycotoxin-Ls1h (77 aa).

Positions 1–20 (MKLIIFTGLVLFAIVSLIEV) are cleaved as a signal peptide. The propeptide occupies 21–26 (QADNER).

This sequence belongs to the neurotoxin 19 (CSTX) family. 08 (U8-Lctx) subfamily. Contains 4 disulfide bonds. As to expression, expressed by the venom gland.

It localises to the secreted. This is U8-lycotoxin-Ls1h from Lycosa singoriensis (Wolf spider).